A 173-amino-acid polypeptide reads, in one-letter code: Adenine phosphoribosyltransferase (173 aa).

Belongs to the purine/pyrimidine phosphoribosyltransferase family. Homodimer.

The protein localises to the cytoplasm. The catalysed reaction is AMP + diphosphate = 5-phospho-alpha-D-ribose 1-diphosphate + adenine. It participates in purine metabolism; AMP biosynthesis via salvage pathway; AMP from adenine: step 1/1. Its function is as follows. Catalyzes a salvage reaction resulting in the formation of AMP, that is energically less costly than de novo synthesis. This is Adenine phosphoribosyltransferase from Solibacter usitatus (strain Ellin6076).